A 1619-amino-acid chain; its full sequence is Rap-GAP domain-containing protein DDB_G0281809 (1619 aa).

4 disordered regions span residues 128 to 249 (SMSN…TTPI), 289 to 316 (QQQQ…MPGS), 907 to 974 (SIGG…PYIN), and 1134 to 1153 (ISNN…TSNN). 2 stretches are compositionally biased toward low complexity: residues 130–204 (SNNN…SLSL) and 231–249 (QISA…TTPI). The stretch at 265-295 (FNEVVQQQQQQQQQQQQQQQQQQQQQQQQQS) forms a coiled coil. 2 stretches are compositionally biased toward low complexity: residues 916–926 (SGNSSQPSSTG) and 934–965 (SGSK…NGGS). One can recognise a Rap-GAP domain in the interval 1273 to 1494 (LNMLDSVSER…TNRKKLISDI (222 aa)). A disordered region spans residues 1554 to 1619 (IGTFTLPPPP…LSQSEDQSHK (66 aa)). Residues 1559 to 1573 (LPPPPISPTISPQPS) show a composition bias toward pro residues. A compositionally biased stretch (low complexity) spans 1574-1590 (PHLSSSGGSWASSKGGS). Polar residues predominate over residues 1591 to 1619 (TQPTTPSGRTSNFLSRRPNLSQSEDQSHK).

This Dictyostelium discoideum (Social amoeba) protein is Rap-GAP domain-containing protein DDB_G0281809.